Reading from the N-terminus, the 495-residue chain is Glycerol kinase (495 aa).

Thr12 lines the ADP pocket. ATP contacts are provided by Thr12, Thr13, and Ser14. A sn-glycerol 3-phosphate-binding site is contributed by Thr12. Arg16 contacts ADP. Sn-glycerol 3-phosphate contacts are provided by Arg82, Glu83, Tyr134, and Asp243. Residues Arg82, Glu83, Tyr134, Asp243, and Gln244 each coordinate glycerol. Residues Thr265 and Gly308 each coordinate ADP. 4 residues coordinate ATP: Thr265, Gly308, Gln312, and Gly409. Positions 409 and 413 each coordinate ADP.

This sequence belongs to the FGGY kinase family.

The enzyme catalyses glycerol + ATP = sn-glycerol 3-phosphate + ADP + H(+). It participates in polyol metabolism; glycerol degradation via glycerol kinase pathway; sn-glycerol 3-phosphate from glycerol: step 1/1. Its activity is regulated as follows. Inhibited by fructose 1,6-bisphosphate (FBP). In terms of biological role, key enzyme in the regulation of glycerol uptake and metabolism. Catalyzes the phosphorylation of glycerol to yield sn-glycerol 3-phosphate. The chain is Glycerol kinase from Ectopseudomonas mendocina (strain ymp) (Pseudomonas mendocina).